The chain runs to 574 residues: Probable E3 ubiquitin-protein ligase ipaH4.5 (574 aa).

Positions Met-1–Met-284 are interaction with target proteins. LRR repeat units lie at residues Arg-63–Leu-82, His-83–Leu-104, Thr-105–Ser-122, Gln-123–Pro-143, Tyr-144–Leu-165, Thr-166–His-183, Arg-184–Leu-205, Lys-206–Gln-223, Glu-224–Pro-246, and Ile-247–Thr-270. Residues Ser-285–Leu-292 are linker. Positions His-293–Ala-574 are E3 ubiquitin-protein ligase catalytic domain. Residues Pro-295 to Ala-574 enclose the NEL domain. Catalysis depends on Cys-379, which acts as the Glycyl thioester intermediate.

Belongs to the LRR-containing bacterial E3 ligase family. In terms of processing, ubiquitinated in the presence of host E1 ubiquitin-activating enzyme, E2 ubiquitin-conjugating enzyme and ubiquitin.

Its subcellular location is the secreted. The protein localises to the host cytoplasm. The catalysed reaction is S-ubiquitinyl-[E2 ubiquitin-conjugating enzyme]-L-cysteine + [acceptor protein]-L-lysine = [E2 ubiquitin-conjugating enzyme]-L-cysteine + N(6)-ubiquitinyl-[acceptor protein]-L-lysine.. Functionally, effector proteins function to alter host cell physiology and promote bacterial survival in host tissues. This protein is an E3 ubiquitin ligase that interferes with host's ubiquitination pathway. In Shigella flexneri, this protein is Probable E3 ubiquitin-protein ligase ipaH4.5 (ipaH4.5).